A 351-amino-acid chain; its full sequence is uncharacterized protein (351 aa).

This is an uncharacterized protein from Caenorhabditis elegans.